A 224-amino-acid polypeptide reads, in one-letter code: Small ribosomal subunit protein uS3 (224 aa).

In terms of domain architecture, KH type-2 spans 38–106 (IRKFISEKLK…QVHINIVEIK (69 aa)).

The protein belongs to the universal ribosomal protein uS3 family. Part of the 30S ribosomal subunit. Forms a tight complex with proteins S10 and S14.

Functionally, binds the lower part of the 30S subunit head. Binds mRNA in the 70S ribosome, positioning it for translation. The protein is Small ribosomal subunit protein uS3 of Lactobacillus acidophilus (strain ATCC 700396 / NCK56 / N2 / NCFM).